The chain runs to 171 residues: Large ribosomal subunit protein uL10 (171 aa).

It belongs to the universal ribosomal protein uL10 family. In terms of assembly, part of the ribosomal stalk of the 50S ribosomal subunit. The N-terminus interacts with L11 and the large rRNA to form the base of the stalk. The C-terminus forms an elongated spine to which L12 dimers bind in a sequential fashion forming a multimeric L10(L12)X complex.

Functionally, forms part of the ribosomal stalk, playing a central role in the interaction of the ribosome with GTP-bound translation factors. The chain is Large ribosomal subunit protein uL10 from Lactococcus lactis subsp. cremoris (strain SK11).